A 185-amino-acid chain; its full sequence is Ribosome-recycling factor (185 aa).

The protein belongs to the RRF family.

It localises to the cytoplasm. Functionally, responsible for the release of ribosomes from messenger RNA at the termination of protein biosynthesis. May increase the efficiency of translation by recycling ribosomes from one round of translation to another. The sequence is that of Ribosome-recycling factor from Clostridium botulinum (strain Alaska E43 / Type E3).